An 82-amino-acid polypeptide reads, in one-letter code: Protein CYSTEINE-RICH TRANSMEMBRANE MODULE 13 (82 aa).

A disordered region spans residues 1–58 (MYHQEQHPVGAPPPQGYPPKDGYPPAGYPPAGYPPPGYAQGYPAQGYPPPQYSQAPQQ). Residues 26 to 37 (AGYPPAGYPPPG) are compositionally biased toward pro residues. The helical transmembrane segment at 59–76 (KQNAGMLEGCLAALCCCC) threads the bilayer.

Belongs to the CYSTM1 family. As to quaternary structure, homodimer and heterodimers. Interacts with CYSTM7, CYTSM3, CYTSM4, CYTSM5, CYTSM6, CYTSM9, CYTSM10 and CYTSM11. Binds weakly to CYSTM1 and CYSTM2. As to expression, expressed in root meristem, root vasculature, leaf vasculature and floral organ primordia. Mostly expressed in roots and flowers and, to a lower extent, in stems, siliques and leaves.

It is found in the cell membrane. Functionally, required for the promotion of megasporogenesis, or promotion of germ cell formation from somatic precursor cells. Acts redundantly with WIH2. Functions in a genetic pathway downstream of SPL/NZZ and WUS and together with TRN2 in promoting megasporogenesis. Involved in resistance to abiotic stress. The polypeptide is Protein CYSTEINE-RICH TRANSMEMBRANE MODULE 13 (Arabidopsis thaliana (Mouse-ear cress)).